A 43-amino-acid chain; its full sequence is Protein PsbN (43 aa).

A helical transmembrane segment spans residues 5–27; the sequence is TLIAISISGLIVSFTGYALYTAF.

The protein belongs to the PsbN family.

The protein resides in the plastid. The protein localises to the chloroplast thylakoid membrane. Functionally, may play a role in photosystem I and II biogenesis. The chain is Protein PsbN from Cicer arietinum (Chickpea).